The following is a 112-amino-acid chain: UPF0060 membrane protein SCO3297 (112 aa).

The next 4 membrane-spanning stretches (helical) occupy residues 8–28 (ALFV…WQGV), 33–53 (GWLW…VATF), 62–82 (ILAA…VVAD), and 88–108 (RWDI…MWAP).

This sequence belongs to the UPF0060 family.

The protein localises to the cell membrane. This Streptomyces coelicolor (strain ATCC BAA-471 / A3(2) / M145) protein is UPF0060 membrane protein SCO3297.